The primary structure comprises 123 residues: Histone H2B.1, embryonic (123 aa).

The segment at 1–32 (MAPTGQVAKKGSKKAVKPPRASGGKKRHRKRK) is disordered. Residues 10–32 (KGSKKAVKPPRASGGKKRHRKRK) show a composition bias toward basic residues. O-linked (GlcNAc) serine glycosylation is present at Ser-110. Lys-118 is covalently cross-linked (Glycyl lysine isopeptide (Lys-Gly) (interchain with G-Cter in ubiquitin)).

It belongs to the histone H2B family. As to quaternary structure, the nucleosome is a histone octamer containing two molecules each of H2A, H2B, H3 and H4 assembled in one H3-H4 heterotetramer and two H2A-H2B heterodimers. The octamer wraps approximately 147 bp of DNA. Post-translationally, monoubiquitination of Lys-118 gives a specific tag for epigenetic transcriptional activation and is also prerequisite for histone H3 'Lys-4' and 'Lys-79' methylation. GlcNAcylation at Ser-110 promotes monoubiquitination of Lys-118. It fluctuates in response to extracellular glucose, and associates with transcribed genes.

The protein localises to the nucleus. It localises to the chromosome. Functionally, core component of nucleosome. Nucleosomes wrap and compact DNA into chromatin, limiting DNA accessibility to the cellular machineries which require DNA as a template. Histones thereby play a central role in transcription regulation, DNA repair, DNA replication and chromosomal stability. DNA accessibility is regulated via a complex set of post-translational modifications of histones, also called histone code, and nucleosome remodeling. The protein is Histone H2B.1, embryonic of Psammechinus miliaris (Green sea urchin).